The primary structure comprises 640 residues: DNA topoisomerase 3 (640 aa).

Residues 21 to 175 (RVLCVAEKNS…WRAQFSHLEP (155 aa)) enclose the Toprim domain. Mg(2+)-binding residues include Glu27, Asp137, and Asp139. Residues 189-618 (DMKLVAAVEC…QLLPLYKEAF (430 aa)) enclose the Topo IA-type catalytic domain. Tyr354 functions as the O-(5'-phospho-DNA)-tyrosine intermediate in the catalytic mechanism.

Belongs to the type IA topoisomerase family. Mg(2+) serves as cofactor.

The enzyme catalyses ATP-independent breakage of single-stranded DNA, followed by passage and rejoining.. In terms of biological role, introduces a single-strand break via transesterification at a target site in duplex DNA. Releases the supercoiling and torsional tension of DNA introduced during the DNA replication and transcription by transiently cleaving and rejoining one strand of the DNA duplex. The scissile phosphodiester is attacked by the catalytic tyrosine of the enzyme, resulting in the formation of a DNA-(5'-phosphotyrosyl)-enzyme intermediate and the expulsion of a 3'-OH DNA strand. The protein is DNA topoisomerase 3 (TOP3) of Candidozyma auris (Yeast).